The sequence spans 151 residues: NAD(P)H-quinone oxidoreductase subunit N (151 aa).

This sequence belongs to the complex I NdhN subunit family. As to quaternary structure, NDH-1 can be composed of about 15 different subunits; different subcomplexes with different compositions have been identified which probably have different functions.

The protein resides in the cellular thylakoid membrane. The enzyme catalyses a plastoquinone + NADH + (n+1) H(+)(in) = a plastoquinol + NAD(+) + n H(+)(out). It catalyses the reaction a plastoquinone + NADPH + (n+1) H(+)(in) = a plastoquinol + NADP(+) + n H(+)(out). NDH-1 shuttles electrons from an unknown electron donor, via FMN and iron-sulfur (Fe-S) centers, to quinones in the respiratory and/or the photosynthetic chain. The immediate electron acceptor for the enzyme in this species is believed to be plastoquinone. Couples the redox reaction to proton translocation, and thus conserves the redox energy in a proton gradient. Cyanobacterial NDH-1 also plays a role in inorganic carbon-concentration. The sequence is that of NAD(P)H-quinone oxidoreductase subunit N from Acaryochloris marina (strain MBIC 11017).